Consider the following 494-residue polypeptide: BUB3-interacting and GLEBS motif-containing protein ZNF207 (494 aa).

The interval 1-92 (MGRKKKKQLK…EGIPEKDMDE (92 aa)) is microtubule-binding region. 2 C2H2-type zinc fingers span residues 11–34 (PWCW…KAKH) and 35–58 (FKCH…MQVH). The segment covering 100-111 (KTQESQKKKQQD) has biased composition (basic and acidic residues). Disordered regions lie at residues 100–161 (KTQE…PGIP), 250–377 (NRPP…SATS), and 455–494 (LPGA…GGRY). Residues 112-121 (DSDEYDDDDS) show a composition bias toward acidic residues. A compositionally biased stretch (polar residues) spans 127–136 (FQPQPVQPQQ). Over residues 142 to 161 (MAQPGLPPVPGAPGMPPGIP) the composition is skewed to pro residues. Over residues 283–300 (SSSTASSNSESLSASSKA) the composition is skewed to low complexity. Positions 323 to 332 (LNSTPATSTE) are enriched in polar residues. Residues 342 to 377 (TQSTASTTSTTNSTAAKPAASITSKPATLTTTSATS) are compositionally biased toward low complexity. The GLEBS stretch occupies residues 375–407 (ATSKLIHPDEDISLEERRAQLPKYQRNLPRPGQ). Positions 463–483 (GQGPPMVPPYQGGPPRPPMGM) are enriched in pro residues.

As to quaternary structure, interacts (via GLEBS region) with BUB3.

It localises to the nucleus. The protein resides in the chromosome. It is found in the centromere. Its subcellular location is the kinetochore. The protein localises to the cytoplasm. It localises to the cytoskeleton. The protein resides in the spindle. Kinetochore- and microtubule-binding protein that plays a key role in spindle assembly. ZNF207/BuGZ is mainly composed of disordered low-complexity regions and undergoes phase transition or coacervation to form temperature-dependent liquid droplets. Coacervation promotes microtubule bundling and concentrates tubulin, promoting microtubule polymerization and assembly of spindle and spindle matrix by concentrating its building blocks. Also acts as a regulator of mitotic chromosome alignment by mediating the stability and kinetochore loading of BUB3. Mechanisms by which BUB3 is protected are unclear: according to a first report, ZNF207/BuGZ may act by blocking ubiquitination and proteasomal degradation of BUB3. According to another report, the stabilization is independent of the proteasome. The sequence is that of BUB3-interacting and GLEBS motif-containing protein ZNF207 from Pongo abelii (Sumatran orangutan).